We begin with the raw amino-acid sequence, 383 residues long: Succinyl-diaminopimelate desuccinylase (383 aa).

A Zn(2+)-binding site is contributed by H79. D81 is a catalytic residue. D110 serves as a coordination point for Zn(2+). The Proton acceptor role is filled by E141. Positions 142, 170, and 355 each coordinate Zn(2+).

Belongs to the peptidase M20A family. DapE subfamily. Homodimer. Requires Zn(2+) as cofactor. The cofactor is Co(2+).

The enzyme catalyses N-succinyl-(2S,6S)-2,6-diaminopimelate + H2O = (2S,6S)-2,6-diaminopimelate + succinate. The protein operates within amino-acid biosynthesis; L-lysine biosynthesis via DAP pathway; LL-2,6-diaminopimelate from (S)-tetrahydrodipicolinate (succinylase route): step 3/3. Catalyzes the hydrolysis of N-succinyl-L,L-diaminopimelic acid (SDAP), forming succinate and LL-2,6-diaminopimelate (DAP), an intermediate involved in the bacterial biosynthesis of lysine and meso-diaminopimelic acid, an essential component of bacterial cell walls. The protein is Succinyl-diaminopimelate desuccinylase of Helicobacter pylori (strain HPAG1).